Reading from the N-terminus, the 376-residue chain is Thiol-disulfide oxidoreductase LTO1 (376 aa).

The N-terminal 45 residues, 1 to 45, are a transit peptide targeting the chloroplast; that stretch reads MMARFVSVSSCQFHFGFREVSPPSVTSYPRRFEVSDRRFPAIPIK. The tract at residues 44–77 is disordered; it reads IKCSSSEPENGEDSAPSLSSSSSSSTSEVSTSNS. At 46-81 the chain is on the stromal side; that stretch reads CSSSEPENGEDSAPSLSSSSSSSTSEVSTSNSSTYN. Residues 57 to 77 show a composition bias toward low complexity; the sequence is SAPSLSSSSSSSTSEVSTSNS. Residues 82-102 form a helical membrane-spanning segment; sequence WYTGIGGIGMLDTAYLTYLKV. Residues 103-125 are Lumenal-facing; the sequence is TGSDAFCPIGGGTCGDVLNSDYA. A disulfide bridge connects residues Cys-109 and Cys-116. A helical transmembrane segment spans residues 126-146; that stretch reads VVFGVPLPVIGFVMYGVVTAL. The Stromal portion of the chain corresponds to 147-165; it reads SAELGEGNLPFGISKSNGR. A helical membrane pass occupies residues 166 to 186; it reads FALFGITTAMASASAYFLYIL. Residues 187 to 192 are Lumenal-facing; it reads STKLSG. Residues 193-213 form a helical membrane-spanning segment; the sequence is SSCLYCLVSAFLSFSLFFLSV. Cys-195 and Cys-198 are oxidised to a cystine. Over 214-223 the chain is Stromal; it reads KDVKLQEIQQ. The helical transmembrane segment at 224–244 threads the bilayer; that stretch reads VVGLQICLAIIVVASLTASYS. Topologically, residues 245–376 are lumenal; the sequence is TAQPIPSRSG…DQANETNQLQ (132 aa). Disulfide bonds link Cys-293–Cys-296 and Cys-316–Cys-331.

Belongs to the VKOR family. In terms of assembly, interacts with the PSII subunits PSBO1 and PSBO2. Interacts with TL17, TL20.3, HCF164, PETJ, VDE1, EDA3, FKBP13 and FKBP20-2. Expressed in cotyledons, rosette leaves, stems, cauline leaves and flowers.

It is found in the plastid. It localises to the chloroplast thylakoid membrane. In terms of biological role, thiol-disulfide oxidoreductase catalyzing disulfide bond formation of chloroplast proteins and involved in redox regulation and photosynthetic electron transport. Required for the assembly of photosystem II (PSII) through the formation of disulfide bond in PSBO, a subunit of the PSII oxygen-evolving complex in the thylakoid lumen. Involved in the formation of disulfide bonds in the lumenal protein FKBP13. In vitro, reduces phylloquinone (vitamin K1) and menaquinone (vitamin K2) to their respective quinol. Cannot reduce phylloquinone epoxide to phylloquinone. Plays an important role in regulating the thylakoid lumen redox. The chain is Thiol-disulfide oxidoreductase LTO1 from Arabidopsis thaliana (Mouse-ear cress).